We begin with the raw amino-acid sequence, 305 residues long: NADH-cytochrome b5 reductase 1 (305 aa).

A helical membrane pass occupies residues 8 to 28; it reads VLLASLGVGLVTLLGLAVGSY. One can recognise an FAD-binding FR-type domain in the interval 44–156; that stretch reads NEKYLLRLLD…RGPSGLLTYT (113 aa). Residues 136–166 and 175–210 contribute to the FAD site; these read DSLKVGDVVEFRGPSGLLTYTGKGHFNIQPN and VAKKLGMIAGGTGITPMLQLIRAILKVPEDPTQCFL.

Belongs to the flavoprotein pyridine nucleotide cytochrome reductase family. FAD serves as cofactor. Widely expressed.

The protein localises to the membrane. It catalyses the reaction 2 Fe(III)-[cytochrome b5] + NADH = 2 Fe(II)-[cytochrome b5] + NAD(+) + H(+). Its function is as follows. NADH-cytochrome b5 reductases are involved in desaturation and elongation of fatty acids, cholesterol biosynthesis, drug metabolism, and, in erythrocyte, methemoglobin reduction. This is NADH-cytochrome b5 reductase 1 (CYB5R1) from Homo sapiens (Human).